The following is a 563-amino-acid chain: Dihydroxy-acid dehydratase (563 aa).

A Mg(2+)-binding site is contributed by aspartate 78. Cysteine 119 provides a ligand contact to [2Fe-2S] cluster. Mg(2+) contacts are provided by aspartate 120 and lysine 121. At lysine 121 the chain carries N6-carboxylysine. Residue cysteine 191 participates in [2Fe-2S] cluster binding. Glutamate 442 provides a ligand contact to Mg(2+). The Proton acceptor role is filled by serine 468.

Belongs to the IlvD/Edd family. In terms of assembly, homodimer. [2Fe-2S] cluster serves as cofactor. Mg(2+) is required as a cofactor.

The catalysed reaction is (2R)-2,3-dihydroxy-3-methylbutanoate = 3-methyl-2-oxobutanoate + H2O. It catalyses the reaction (2R,3R)-2,3-dihydroxy-3-methylpentanoate = (S)-3-methyl-2-oxopentanoate + H2O. It functions in the pathway amino-acid biosynthesis; L-isoleucine biosynthesis; L-isoleucine from 2-oxobutanoate: step 3/4. The protein operates within amino-acid biosynthesis; L-valine biosynthesis; L-valine from pyruvate: step 3/4. In terms of biological role, functions in the biosynthesis of branched-chain amino acids. Catalyzes the dehydration of (2R,3R)-2,3-dihydroxy-3-methylpentanoate (2,3-dihydroxy-3-methylvalerate) into 2-oxo-3-methylpentanoate (2-oxo-3-methylvalerate) and of (2R)-2,3-dihydroxy-3-methylbutanoate (2,3-dihydroxyisovalerate) into 2-oxo-3-methylbutanoate (2-oxoisovalerate), the penultimate precursor to L-isoleucine and L-valine, respectively. This Desulfitobacterium hafniense (strain DSM 10664 / DCB-2) protein is Dihydroxy-acid dehydratase.